The primary structure comprises 1139 residues: MASDEIVRNLISREEVMGNLISTASSSVRSPLHDVLCSHVRTIVDSVDKKAVSRKHEDVRRNISSEELQMLINAYPEYAVSSSACESGTHSMAACFRFLETEYLLDMVPMKETFVYDIGGNWFSHMKFRADREIHCCCPILSMRDSERLETRMMAMQKYMRGSKDKPLRLLSRYQNILREQAARTTAFMAGEVNAGVLDGDVFCENTFQDCVRRVPEGFLKTAIAVHSIYDIKVEEFASALKRKGITQAYGCFLFPPAVLIGQKEGILPSVDGHYLVENGRIKFFFANDPNAGYSHDLKDYLKYVEKTYVDIEDGVFAIELMQMRGDTMFFKITDVTAAMYHMKYRGMKRDETFKCIPLLKNSSVVVPLFSWDNRSLKITSGLLPRTLVEQGAAFIMKNKEKDLNVAVLKNYLSAVNNSYIFNGSQVRDGVKIAPDLISKLAVTLYLREKVYRQRENSIISYFEQEMLHDPNLKAMFGDFLWFVPNTLSSVWKNMRKSLMEWFGYAEFDLTTFDICDPVLYVEIVDRYKIIQKGRIPLGEFFDCHEECENYELREKEKNDLAVKMAQKVTGTVTECEKDLGPLVQPIKEILVQLVMPNLVRALCRPRSPTSPLDLKSIPGSTPSHSSSDSEHSMTEEASCTIAGSVPTWEIATRKDLTFQRIDEDMSRRTGMPPRPKVTSSYNMNARAEFLYYQLCSVICERAQILSVIEDFRQNLIFSDKVAVPLNARFYSFQSLRPGWVFKTPSHSEVGHSYAVHFDFKTIGTDLEESLAFCRMVPISWDKSGKYIATTPHFPERHGYYVICDNTKLCNNWLIYNKLVDVYALVADRPLRFELIDGVPGCGKSTMILNSCDIRREVVVGEGRNATDDLRERFKRKKNLNSKTANHRVRTLDSLLLAEGPCVPQADRFHFDEALKVHYGAIMFCADKLGASEILAQGDRAQLPMICRVEGIELQFQSPDYTKTIINPKLRSYRIPGDVAFYLSAKEFYKVKGIPQKVITSNSVKRSLYARGETTPERFVSLLDVPVRKDTHYLTFLQAEKESLMSHLIPKGVKKESISTIHEAQGGTYENVILVRLQRTPNEIYPGGPRSAPYIVVGTSRHTKTFTYCSVTDDKLLLDIADVGGIAHTPIRTFESHIV.

The segment at 60 to 438 is methyltransferase; that stretch reads RRNISSEELQ…DGVKIAPDLI (379 aa). In terms of domain architecture, Alphavirus-like MT spans 81–305; sequence SSSACESGTH…HDLKDYLKYV (225 aa). Positions 611 to 637 are disordered; it reads SPLDLKSIPGSTPSHSSSDSEHSMTEE. Over residues 617-627 the composition is skewed to low complexity; that stretch reads SIPGSTPSHSS. The (+)RNA virus helicase ATP-binding domain occupies 805–969; the sequence is DNTKLCNNWL…DYTKTIINPK (165 aa). The helicase stretch occupies residues 835 to 1109; sequence LIDGVPGCGK…SRHTKTFTYC (275 aa). ATP is bound at residue 838–845; it reads GVPGCGKS. In terms of domain architecture, (+)RNA virus helicase C-terminal spans 970–1139; sequence LRSYRIPGDV…PIRTFESHIV (170 aa).

In terms of assembly, interacts with the suppressor of RNA silencing Gamma-B (via C-terminus).

Its subcellular location is the host chloroplast envelope. It carries out the reaction ATP + H2O = ADP + phosphate + H(+). Functionally, probably contains methyltransferase and helicase activities. Methyltransferase displays a cytoplasmic capping enzyme activity. This function is necessary since all viral RNAs are synthesized in the cytoplasm, and host capping enzymes are restricted to the nucleus. Helicase region probably exhibits NTPase and RNA unwinding activities. In Barley stripe mosaic virus (BSMV), this protein is Replication protein alpha-A.